Consider the following 214-residue polypeptide: Probable transaldolase (214 aa).

Residue Lys-83 is the Schiff-base intermediate with substrate of the active site.

This sequence belongs to the transaldolase family. Type 3B subfamily.

The protein localises to the cytoplasm. The catalysed reaction is D-sedoheptulose 7-phosphate + D-glyceraldehyde 3-phosphate = D-erythrose 4-phosphate + beta-D-fructose 6-phosphate. It functions in the pathway carbohydrate degradation; pentose phosphate pathway; D-glyceraldehyde 3-phosphate and beta-D-fructose 6-phosphate from D-ribose 5-phosphate and D-xylulose 5-phosphate (non-oxidative stage): step 2/3. Functionally, transaldolase is important for the balance of metabolites in the pentose-phosphate pathway. This Streptococcus pyogenes serotype M1 protein is Probable transaldolase (tal).